An 873-amino-acid chain; its full sequence is F-box only protein 41 (873 aa).

Residues 85 to 97 (ESTSFQGKEQATG) are compositionally biased toward polar residues. 3 disordered regions span residues 85–110 (ESTS…HHHH), 163–193 (SSAC…SPAD), and 345–540 (SSSC…PSRS). The segment covering 168–178 (TPPPGPGPGPC) has biased composition (pro residues). Positions 179 to 192 (SGPSSASPASPSPA) are enriched in low complexity. Residues 207–349 (ALEKLEVDRR…QLQVISSSCG (143 aa)) are a coiled coil. A compositionally biased stretch (gly residues) spans 357-371 (GRGGGGSASGPGVRG). Arg-358 carries the omega-N-methylarginine modification. Composition is skewed to polar residues over residues 384 to 414 (VPST…SSGC) and 442 to 456 (AQAT…QAPR). Ser-476 carries the phosphoserine modification. Thr-477 is subject to Phosphothreonine. The F-box domain maps to 548–592 (ILKMRAALFCIFTYLDTRTLLHAAEVCRDWRFVARHPAVWTRVLL). The residue at position 760 (Ser-760) is a Phosphoserine.

Directly interacts with SKP1 and CUL1.

Substrate-recognition component of the SCF (SKP1-CUL1-F-box protein)-type E3 ubiquitin ligase complex. This Mus musculus (Mouse) protein is F-box only protein 41 (Fbxo41).